Here is a 421-residue protein sequence, read N- to C-terminus: Subtilisin-like protease 2 (421 aa).

The N-terminal stretch at 1–16 (MQLLNFGLLLLPFVAG) is a signal peptide. Residues 17-122 (DLAPQPEPLL…VHPDQHVYLA (106 aa)) constitute a propeptide that is removed on maturation. Positions 36–122 (QYIVTLKEGL…VHPDQHVYLA (87 aa)) constitute an Inhibitor I9 domain. One can recognise a Peptidase S8 domain in the interval 131 to 421 (RWGLGYMSSK…ERKFTLPKYY (291 aa)). Residues Asp-169 and His-201 each act as charge relay system in the active site. N-linked (GlcNAc...) asparagine glycosylation is found at Asn-248, Asn-261, and Asn-348. The Charge relay system role is filled by Ser-357. Asn-388 carries an N-linked (GlcNAc...) asparagine glycan.

The protein belongs to the peptidase S8 family.

It localises to the secreted. Functionally, secreted subtilisin-like serine protease with keratinolytic activity that contributes to pathogenicity. This chain is Subtilisin-like protease 2 (SUB2), found in Trichophyton verrucosum (strain HKI 0517).